The primary structure comprises 196 residues: NADPH:quinone oxidoreductase (196 aa).

It belongs to the SsuE family. In terms of assembly, homotetramer. Requires FMN as cofactor.

The protein localises to the cell membrane. It catalyses the reaction a quinone + NADH + H(+) = a quinol + NAD(+). It carries out the reaction a quinone + NADPH + H(+) = a quinol + NADP(+). Its function is as follows. The enzyme apparently serves as a quinone reductase in connection with conjugation reactions of hydroquinones involved in detoxification pathways. The polypeptide is NADPH:quinone oxidoreductase (NQR) (Arabidopsis thaliana (Mouse-ear cress)).